Consider the following 375-residue polypeptide: Pectate lyase B (375 aa).

A signal peptide spans 1 to 22 (MKSLITPIAAGLLLAFSQYSLA). A disulfide bridge links C93 with C176. Ca(2+) is bound by residues D150, D152, E187, and D191. Residue R240 is part of the active site. The cysteines at positions 351 and 374 are disulfide-linked.

It belongs to the polysaccharide lyase 1 family. PLADES subfamily. It depends on Ca(2+) as a cofactor.

It localises to the secreted. The catalysed reaction is Eliminative cleavage of (1-&gt;4)-alpha-D-galacturonan to give oligosaccharides with 4-deoxy-alpha-D-galact-4-enuronosyl groups at their non-reducing ends.. It participates in glycan metabolism; pectin degradation; 2-dehydro-3-deoxy-D-gluconate from pectin: step 2/5. Its function is as follows. Involved in maceration and soft-rotting of plant tissue. The protein is Pectate lyase B (pelB) of Dickeya chrysanthemi (Pectobacterium chrysanthemi).